A 711-amino-acid chain; its full sequence is MSLVVGQSLGLTLVGDGLSLRNSKINVGKSKFFSVNRRRLARAALVQARPKEDGAAASPSPSSRPASVVQYRRADLADDLQAEARALGRAIDASIYSPELIARKHGSQPFKALRRSLEILGALGGFALKLGIDQKQGNLEKNMKKRAIELRRIFTRLGPTFVKLGQGLSTRPDLCPPDYLEELAELQDALPTFPDAEAFACIERELDLSLETIFSSVSPEPIAAASLGQVYKAQLRYSGQVVAVKVQRPGIEEAIGLDFYLIRGVGKLINKYVDFITTDVLTLIDEFACRVYQELNYVQEAQNARRFKKLYADKADVLVPDIFWDYTSRKVLTMEWVEGTKLNEQLAIESQGLKVLDLVNTGIQCSLRQLLEYGFFHADPHPGNLLATPDGKLAFLDFGMMSETPEEARFAIIGHVVHLVNRDYEAMARDYYALKFLSPDVDVTPIIPALRDFFDDALNYTVSELNFKTLVDGLGAVFYQYPFNVPPYYALILRSLTVLEGLALYADPNFKVLAASYPYFAKRLLTDPNPYLRDALIELLFKDGKFRWNRLENLLQQGSKDRDFSAKDALQPVLKLLLDPNGEELRLLVIKEAVRVSEAIALGTVVDTYNSLPEFLRSLVFNGNGNGPLTMSTAELQSTLELRDQVSRIWGLLQSSESFDPAILQPILQVLQQPEARRLGGRVAGGVGQRLAARFLQQLLRATTPSSAPSP.

Residues 1–42 (MSLVVGQSLGLTLVGDGLSLRNSKINVGKSKFFSVNRRRLAR) constitute a chloroplast transit peptide. The Protein kinase domain maps to 216 to 546 (SVSPEPIAAA…IELLFKDGKF (331 aa)). ATP-binding positions include 222-230 (IAAASLGQV) and K245. The active-site Proton acceptor is D379.

The protein belongs to the protein kinase superfamily. ADCK protein kinase family. In terms of assembly, interacts with ABC1K1 in plastoglobules (PG). Interacts with PGM48.

It localises to the plastid. Its subcellular location is the chloroplast. The protein resides in the plastoglobule. The enzyme catalyses L-seryl-[protein] + ATP = O-phospho-L-seryl-[protein] + ADP + H(+). It carries out the reaction L-threonyl-[protein] + ATP = O-phospho-L-threonyl-[protein] + ADP + H(+). In terms of biological role, kinase that can phosphorylate the tocopherol cyclase VTE1, a key enzyme of tocopherol (vitamin E) metabolism and involved in the recycling of oxidated alpha-tocopherol quinone, possibly stabilizing it at plastoglobules. Also regulates membrane prenylquinone composition. Required for photooxidative stress responses to prevent photosystem II core and chlorophyll degradations. Together with ABC1K1, contributes to plastoglobule (PG) function in prenyl-lipid metabolism, stress response, and thylakoid remodeling. Promotes photodamage of chloroplasts under continuous red light, thus working in opposition to ABC1K1. In Arabidopsis thaliana (Mouse-ear cress), this protein is Protein ACTIVITY OF BC1 COMPLEX KINASE 3, chloroplastic.